A 315-amino-acid polypeptide reads, in one-letter code: Methenyltetrahydromethanopterin cyclohydrolase (315 aa).

The protein belongs to the MCH family.

It is found in the cytoplasm. It carries out the reaction 5,10-methenyl-5,6,7,8-tetrahydromethanopterin + H2O = N(5)-formyl-5,6,7,8-tetrahydromethanopterin + H(+). Its pathway is one-carbon metabolism; methanogenesis from CO(2); 5,10-methenyl-5,6,7,8-tetrahydromethanopterin from CO(2): step 3/3. Functionally, catalyzes the reversible interconversion of 5-formyl-H(4)MPT to methenyl-H(4)MPT(+). This Methanoculleus marisnigri (strain ATCC 35101 / DSM 1498 / JR1) protein is Methenyltetrahydromethanopterin cyclohydrolase.